The following is a 313-amino-acid chain: MSRNGRNDYDYDDDYDNDQMGGRLARDRERDSEGYLYTKTGERNRRSGPEARERNRENALNRSRNDGRFAPERGGRGYGDDDVKYTKSGRVNGRTTREARERNSRTARSEERDELGRFIGKRGSSRATRGTYTEGANDAAQLLLGGKQGVAENPETDERHSDAFRMEHRRLAEERERDEFGRFLPTEDGEDGRRGRRSNSRRRSSNARSTSSRSSGSRSSGSRSSGSRSSGSRSTGSKTSSRSSGSKTSRSSGSSRSRSGSSGSKSGRSRNSRSGTSGRSSNSRSGSRSGSSSRSSNSRSGSRSSSRSGSSRR.

Residues 1–313 form a disordered region; that stretch reads MSRNGRNDYD…SSSRSGSSRR (313 aa). 4 stretches are compositionally biased toward basic and acidic residues: residues 24-33, 40-85, 95-116, and 156-181; these read LARDRERDSE, TGER…DVKY, TTRE…DELG, and TDER…DEFG. A compositionally biased stretch (basic residues) spans 194–205; it reads RGRRSNSRRRSS. Composition is skewed to low complexity over residues 206–266 and 272–313; these read NARS…GSKS and SRSG…SSRR.

It is found in the virion. This is an uncharacterized protein from Acanthamoeba polyphaga mimivirus (APMV).